A 131-amino-acid polypeptide reads, in one-letter code: D-ribose pyranase (131 aa).

H20 serves as the catalytic Proton donor. Substrate-binding positions include D28, H98, and 120–122 (YAN).

It belongs to the RbsD / FucU family. RbsD subfamily. Homodecamer.

The protein resides in the cytoplasm. The catalysed reaction is beta-D-ribopyranose = beta-D-ribofuranose. It participates in carbohydrate metabolism; D-ribose degradation; D-ribose 5-phosphate from beta-D-ribopyranose: step 1/2. Functionally, catalyzes the interconversion of beta-pyran and beta-furan forms of D-ribose. In Chloroflexus aggregans (strain MD-66 / DSM 9485), this protein is D-ribose pyranase.